We begin with the raw amino-acid sequence, 416 residues long: 3-isopropylmalate dehydratase large subunit 2 (416 aa).

[4Fe-4S] cluster contacts are provided by Cys-296, Cys-356, and Cys-359.

This sequence belongs to the aconitase/IPM isomerase family. LeuC type 2 subfamily. In terms of assembly, heterodimer of LeuC and LeuD. [4Fe-4S] cluster is required as a cofactor.

The catalysed reaction is (2R,3S)-3-isopropylmalate = (2S)-2-isopropylmalate. Its pathway is amino-acid biosynthesis; L-leucine biosynthesis; L-leucine from 3-methyl-2-oxobutanoate: step 2/4. Its function is as follows. Catalyzes the isomerization between 2-isopropylmalate and 3-isopropylmalate, via the formation of 2-isopropylmaleate. The sequence is that of 3-isopropylmalate dehydratase large subunit 2 from Archaeoglobus fulgidus (strain ATCC 49558 / DSM 4304 / JCM 9628 / NBRC 100126 / VC-16).